Reading from the N-terminus, the 321-residue chain is Mitochondrial coenzyme A transporter SLC25A42 (321 aa).

3 Solcar repeats span residues 33–119, 131–216, and 226–314; these read RSVL…YKGI, LPPV…LKKT, and PFPY…TQIL. The next 6 helical transmembrane spans lie at 35–55, 91–111, 137–154, 191–208, 232–252, and 295–315; these read VLNSLVSGAFAGAVAKTAVAP, LWRGNSATMVRVIPYAAIQFC, LLAGSLAGTTAAIITYPL, GFTPTILGVVPYAGLSFF, LVFGACAGLIGQSASYPLDVV, and VKGPIAVGISFMTFDLTQILL.

Belongs to the mitochondrial carrier (TC 2.A.29) family.

The protein resides in the mitochondrion inner membrane. The catalysed reaction is ADP(out) + CoA(in) = ADP(in) + CoA(out). It carries out the reaction 3'-dephospho-CoA(in) + ADP(out) = 3'-dephospho-CoA(out) + ADP(in). The enzyme catalyses adenosine 3',5'-bisphosphate(in) + ADP(out) = adenosine 3',5'-bisphosphate(out) + ADP(in). It catalyses the reaction AMP(in) + ADP(out) = AMP(out) + ADP(in). The catalysed reaction is dADP(in) + ADP(out) = dADP(out) + ADP(in). It carries out the reaction ADP(in) + ATP(out) = ADP(out) + ATP(in). In terms of biological role, mitochondrial carrier mediating the transport of coenzyme A (CoA) in mitochondria in exchange for intramitochondrial (deoxy)adenine nucleotides and adenosine 3',5'-diphosphate. This Danio rerio (Zebrafish) protein is Mitochondrial coenzyme A transporter SLC25A42 (slc25a42).